The primary structure comprises 419 residues: UDP-N-acetylglucosamine 1-carboxyvinyltransferase 2 (419 aa).

22 to 23 is a binding site for phosphoenolpyruvate; that stretch reads KN. A UDP-N-acetyl-alpha-D-glucosamine-binding site is contributed by Arg-92. Cys-116 functions as the Proton donor in the catalytic mechanism. 2-(S-cysteinyl)pyruvic acid O-phosphothioketal is present on Cys-116. Residues 121–125, Asp-306, and Ile-328 contribute to the UDP-N-acetyl-alpha-D-glucosamine site; that span reads RPIDL.

It belongs to the EPSP synthase family. MurA subfamily.

The protein resides in the cytoplasm. It catalyses the reaction phosphoenolpyruvate + UDP-N-acetyl-alpha-D-glucosamine = UDP-N-acetyl-3-O-(1-carboxyvinyl)-alpha-D-glucosamine + phosphate. Its pathway is cell wall biogenesis; peptidoglycan biosynthesis. In terms of biological role, cell wall formation. Adds enolpyruvyl to UDP-N-acetylglucosamine. This is UDP-N-acetylglucosamine 1-carboxyvinyltransferase 2 from Streptococcus pyogenes serotype M3 (strain ATCC BAA-595 / MGAS315).